A 483-amino-acid chain; its full sequence is V-type proton ATPase subunit H (483 aa).

Residue S483 is modified to Phosphoserine.

This sequence belongs to the V-ATPase H subunit family. As to quaternary structure, V-ATPase is a heteromultimeric enzyme made up of two complexes: the ATP-hydrolytic V1 complex and the proton translocation V0 complex. The V1 complex consists of three catalytic AB heterodimers that form a heterohexamer, three peripheral stalks each consisting of EG heterodimers, one central rotor including subunits D and F, and the regulatory subunits C and H. The proton translocation complex V0 consists of the proton transport subunit a, a ring of proteolipid subunits c9c'', rotary subunit d, subunits e and f, and the accessory subunits ATP6AP1/Ac45 and ATP6AP2/PRR. Interacts with AP2M1.

It is found in the cytoplasmic vesicle. The protein resides in the clathrin-coated vesicle membrane. Functionally, subunit of the V1 complex of vacuolar(H+)-ATPase (V-ATPase), a multisubunit enzyme composed of a peripheral complex (V1) that hydrolyzes ATP and a membrane integral complex (V0) that translocates protons. V-ATPase is responsible for acidifying and maintaining the pH of intracellular compartments and in some cell types, is targeted to the plasma membrane, where it is responsible for acidifying the extracellular environment. Subunit H is essential for V-ATPase activity, but not for the assembly of the complex. Involved in the endocytosis mediated by clathrin-coated pits, required for the formation of endosomes. In Sus scrofa (Pig), this protein is V-type proton ATPase subunit H (ATP6V1H).